The following is a 183-amino-acid chain: MAKKATLVDHGAAKGKKKAQSKVSKKNANKRLVVATNRRARHDYTILDTWEAGIQLVGTEVKSLREGKASLIDSFATIDDGEVWLRHLHIPEYSKGHWTNHSPRRTRKLLLHRNEIDSIMGKVRDGNNTLIPLSLYFSDGKLKVELALGRGKQDYDRRQDIKRRTEEREATRALGRRVKGLTG.

Positions 1–27 are disordered; sequence MAKKATLVDHGAAKGKKKAQSKVSKKN. Over residues 13-27 the composition is skewed to basic residues; sequence AKGKKKAQSKVSKKN.

Belongs to the SmpB family.

It is found in the cytoplasm. Functionally, required for rescue of stalled ribosomes mediated by trans-translation. Binds to transfer-messenger RNA (tmRNA), required for stable association of tmRNA with ribosomes. tmRNA and SmpB together mimic tRNA shape, replacing the anticodon stem-loop with SmpB. tmRNA is encoded by the ssrA gene; the 2 termini fold to resemble tRNA(Ala) and it encodes a 'tag peptide', a short internal open reading frame. During trans-translation Ala-aminoacylated tmRNA acts like a tRNA, entering the A-site of stalled ribosomes, displacing the stalled mRNA. The ribosome then switches to translate the ORF on the tmRNA; the nascent peptide is terminated with the 'tag peptide' encoded by the tmRNA and targeted for degradation. The ribosome is freed to recommence translation, which seems to be the essential function of trans-translation. The chain is SsrA-binding protein from Corynebacterium kroppenstedtii (strain DSM 44385 / JCM 11950 / CIP 105744 / CCUG 35717).